Here is a 517-residue protein sequence, read N- to C-terminus: 2-isopropylmalate synthase (517 aa).

A Pyruvate carboxyltransferase domain is found at 5 to 268; it reads IIIFDTTLRD…DTRINTQEIH (264 aa). Aspartate 14, histidine 202, histidine 204, and asparagine 238 together coordinate Mn(2+). The segment at 393–517 is regulatory domain; sequence SLDVITSQTI…ADLKSHKISQ (125 aa).

Belongs to the alpha-IPM synthase/homocitrate synthase family. LeuA type 1 subfamily. Homodimer. Requires Mn(2+) as cofactor.

The protein localises to the cytoplasm. It catalyses the reaction 3-methyl-2-oxobutanoate + acetyl-CoA + H2O = (2S)-2-isopropylmalate + CoA + H(+). Its pathway is amino-acid biosynthesis; L-leucine biosynthesis; L-leucine from 3-methyl-2-oxobutanoate: step 1/4. Its function is as follows. Catalyzes the condensation of the acetyl group of acetyl-CoA with 3-methyl-2-oxobutanoate (2-ketoisovalerate) to form 3-carboxy-3-hydroxy-4-methylpentanoate (2-isopropylmalate). This is 2-isopropylmalate synthase from Histophilus somni (strain 129Pt) (Haemophilus somnus).